A 455-amino-acid chain; its full sequence is Phosphoglucosamine mutase (455 aa).

Residue S108 is the Phosphoserine intermediate of the active site. Mg(2+) contacts are provided by S108, D246, D248, and D250. S108 carries the post-translational modification Phosphoserine.

It belongs to the phosphohexose mutase family. Mg(2+) is required as a cofactor. Post-translationally, activated by phosphorylation.

The catalysed reaction is alpha-D-glucosamine 1-phosphate = D-glucosamine 6-phosphate. Catalyzes the conversion of glucosamine-6-phosphate to glucosamine-1-phosphate. In Frankia casuarinae (strain DSM 45818 / CECT 9043 / HFP020203 / CcI3), this protein is Phosphoglucosamine mutase.